The following is a 100-amino-acid chain: Small ribosomal subunit protein uS14 (100 aa).

This sequence belongs to the universal ribosomal protein uS14 family. As to quaternary structure, part of the 30S ribosomal subunit. Contacts proteins S3 and S10.

In terms of biological role, binds 16S rRNA, required for the assembly of 30S particles and may also be responsible for determining the conformation of the 16S rRNA at the A site. The sequence is that of Small ribosomal subunit protein uS14 from Synechococcus sp. (strain CC9605).